Consider the following 272-residue polypeptide: Phosphate import ATP-binding protein PstB (272 aa).

Residues 18–257 (VSMQNVTISY…FNDTQSIFNS (240 aa)) enclose the ABC transporter domain. Position 50 to 57 (50 to 57 (GPSGCGKS)) interacts with ATP.

The protein belongs to the ABC transporter superfamily. Phosphate importer (TC 3.A.1.7) family. As to quaternary structure, the complex is composed of two ATP-binding proteins (PstB), two transmembrane proteins (PstC and PstA) and a solute-binding protein (PstS).

It localises to the cell inner membrane. The catalysed reaction is phosphate(out) + ATP + H2O = ADP + 2 phosphate(in) + H(+). Its function is as follows. Part of the ABC transporter complex PstSACB involved in phosphate import. Responsible for energy coupling to the transport system. In Synechococcus sp. (strain CC9902), this protein is Phosphate import ATP-binding protein PstB.